A 188-amino-acid chain; its full sequence is dCTP deaminase (188 aa).

Residues 111–116 (KSTYAR), 135–137 (TLE), Gln156, Tyr170, and Gln180 each bind dCTP. The active-site Proton donor/acceptor is the Glu137.

Belongs to the dCTP deaminase family. As to quaternary structure, homotrimer.

It carries out the reaction dCTP + H2O + H(+) = dUTP + NH4(+). It functions in the pathway pyrimidine metabolism; dUMP biosynthesis; dUMP from dCTP (dUTP route): step 1/2. Its function is as follows. Catalyzes the deamination of dCTP to dUTP. The polypeptide is dCTP deaminase (Polaromonas sp. (strain JS666 / ATCC BAA-500)).